Consider the following 581-residue polypeptide: Probable bifunctional SAT/APS kinase 2 (581 aa).

Positions 1 to 200 (MSGFVVWFTG…AAGGARGLIA (200 aa)) are adenylsulfate kinase. 10–17 (GLSGAGKS) contacts ATP. The Phosphoserine intermediate role is filled by Ser84. Positions 201–581 (PHGGELVNRW…ILIESMRSSS (381 aa)) are sulfate adenylyltransferase.

This sequence in the N-terminal section; belongs to the APS kinase family. In the C-terminal section; belongs to the sulfate adenylyltransferase family.

The catalysed reaction is sulfate + ATP + H(+) = adenosine 5'-phosphosulfate + diphosphate. The enzyme catalyses adenosine 5'-phosphosulfate + ATP = 3'-phosphoadenylyl sulfate + ADP + H(+). The protein operates within sulfur metabolism; hydrogen sulfide biosynthesis; sulfite from sulfate: step 1/3. It functions in the pathway sulfur metabolism; hydrogen sulfide biosynthesis; sulfite from sulfate: step 2/3. In Sorangium cellulosum (strain So ce56) (Polyangium cellulosum (strain So ce56)), this protein is Probable bifunctional SAT/APS kinase 2 (sat2/cysC2).